The following is a 191-amino-acid chain: MSIKSDRWIRKMAEEHGMIEPFEAGQVRFNDAGERLVSYGTSSYGYDVRCAPEFKVFTNVHSVIVDPKNFDEKSFIDVIGDECIIPPNSFALARTMEYFRIPRDVLTICLGKSTYARCGIIVNVTPLEPEWEGHVTLEFSNTTNLPARIYAGEGVAQMLFFQSDADDVCETSYKDRGGKYQGQRGVTLPRT.

DCTP contacts are provided by residues K112–R117, T136–E138, Q157, Y173, and Q183. Residue E138 is the Proton donor/acceptor of the active site.

Belongs to the dCTP deaminase family. Homotrimer.

The catalysed reaction is dCTP + H2O + H(+) = dUTP + NH4(+). It functions in the pathway pyrimidine metabolism; dUMP biosynthesis; dUMP from dCTP (dUTP route): step 1/2. In terms of biological role, catalyzes the deamination of dCTP to dUTP. In Psychrobacter cryohalolentis (strain ATCC BAA-1226 / DSM 17306 / VKM B-2378 / K5), this protein is dCTP deaminase.